A 306-amino-acid chain; its full sequence is Protein SULFUR DEFICIENCY-INDUCED 1 (306 aa).

TPR repeat units lie at residues 1–22 (MERS…NLMK), 71–104 (DSAL…CSKN), 107–140 (DSLD…IYQG), 167–200 (SRLL…EPDA), and 202–233 (KSCN…RVLG). Positions 72–139 (SALKDMAVVM…LKRKLRQIYQ (68 aa)) form a coiled coil. Positions 238–260 (RTRQRAEELLSELESSLPRMRDA) form a coiled coil. The TPR 6 repeat unit spans residues 270–304 (LDDDFVLGLEEMTSTSFKSKRLPIFEQISSFRNTL).

The protein belongs to the MS5 protein family.

It localises to the nucleus. Involved in the utilization of stored sulfate under sulfur-deficient conditions. The protein is Protein SULFUR DEFICIENCY-INDUCED 1 of Arabidopsis thaliana (Mouse-ear cress).